Consider the following 410-residue polypeptide: LL-diaminopimelate aminotransferase (410 aa).

The substrate site is built by Tyr-15 and Gly-42. Pyridoxal 5'-phosphate-binding positions include Tyr-72, 108–109 (AK), Tyr-132, Asn-187, Tyr-218, and 246–248 (SFS). The substrate site is built by Lys-109, Tyr-132, and Asn-187. At Lys-249 the chain carries N6-(pyridoxal phosphate)lysine. Pyridoxal 5'-phosphate contacts are provided by Arg-257 and Asn-292. Substrate-binding residues include Asn-292 and Arg-388.

Belongs to the class-I pyridoxal-phosphate-dependent aminotransferase family. LL-diaminopimelate aminotransferase subfamily. Homodimer. It depends on pyridoxal 5'-phosphate as a cofactor.

The catalysed reaction is (2S,6S)-2,6-diaminopimelate + 2-oxoglutarate = (S)-2,3,4,5-tetrahydrodipicolinate + L-glutamate + H2O + H(+). Its pathway is amino-acid biosynthesis; L-lysine biosynthesis via DAP pathway; LL-2,6-diaminopimelate from (S)-tetrahydrodipicolinate (aminotransferase route): step 1/1. Its function is as follows. Involved in the synthesis of meso-diaminopimelate (m-DAP or DL-DAP), required for both lysine and peptidoglycan biosynthesis. Catalyzes the direct conversion of tetrahydrodipicolinate to LL-diaminopimelate. In Picosynechococcus sp. (strain ATCC 27264 / PCC 7002 / PR-6) (Agmenellum quadruplicatum), this protein is LL-diaminopimelate aminotransferase.